The sequence spans 400 residues: Tryptophan synthase beta chain (400 aa).

Lys-91 carries the post-translational modification N6-(pyridoxal phosphate)lysine.

The protein belongs to the TrpB family. In terms of assembly, tetramer of two alpha and two beta chains. It depends on pyridoxal 5'-phosphate as a cofactor.

The catalysed reaction is (1S,2R)-1-C-(indol-3-yl)glycerol 3-phosphate + L-serine = D-glyceraldehyde 3-phosphate + L-tryptophan + H2O. It functions in the pathway amino-acid biosynthesis; L-tryptophan biosynthesis; L-tryptophan from chorismate: step 5/5. In terms of biological role, the beta subunit is responsible for the synthesis of L-tryptophan from indole and L-serine. The polypeptide is Tryptophan synthase beta chain (Listeria monocytogenes serovar 1/2a (strain ATCC BAA-679 / EGD-e)).